Here is a 276-residue protein sequence, read N- to C-terminus: SKA complex subunit 1 homolog (276 aa).

Positions Val48–Lys78 form a coiled coil.

Belongs to the SKA1 family.

The polypeptide is SKA complex subunit 1 homolog (Oryza sativa subsp. indica (Rice)).